A 433-amino-acid chain; its full sequence is Oxidoreductase acuF (433 aa).

It participates in secondary metabolite biosynthesis. Its function is as follows. Oxidoreductase; part of the gene cluster that mediates the biosynthesis of aculins. The pathway begins with the synthesis of 6-methylsalicylic acid by the polyketide synthase (PKS) acuA via condensation of acetate and malonate units. The 6-methylsalicylic acid decarboxylase acuB then catalyzes the decarboxylation of 6-methylsalicylic acid to yield m-cresol (also known as 3-methylphenol). These first reactions occur in the cytosol. The intermediate m-cresol is then transported into the endoplasmic reticulum where the cytochrome P450 monooxygenase acuC converts it to m-hydroxybenzyl alcohol, which is further converted to gentisyl alcohol by the cytochrome P450 monooxygenase acuD. Gentisyl alcohol is further oxidized by the oxidoreductase acuE that probably catalyzes hydroxylation of the aromatic ring. The aromatic system might then be opened by oxidation through a Baeyer-Villiger type of oxidation, which could be catalyzed by acuF, with the carboxylic acid at C-1 subsequently reduced to an aldehyde by acuG. Subsequently, a hemiacetal is formed, before the dehydrogenase acuH would reduce the double bond between C-4 and C-6. Finally, keto-enol tautomerism results in formation of aculinic acid, which exists as two diastereomers (both R/S configurations at C-1) by non-enzymatic hemiacetal formation. The carboxypeptidase acuI could be involved in the linking of aculinic acid to an aculene A moiety produced by the aculene biosynthesis cluster and which leads to the production of aculin A. AcuI may also be involved in the attachment of proline to aculinic acid to form epi-aculins A and B. The polypeptide is Oxidoreductase acuF (Aspergillus aculeatus (strain ATCC 16872 / CBS 172.66 / WB 5094)).